The sequence spans 80 residues: Serine palmitoyltransferase small subunit A-A (80 aa).

Topologically, residues M1–H21 are cytoplasmic. Residues M22–L38 traverse the membrane as a helical segment. Residues E39–R43 lie on the Lumenal side of the membrane. Residues T44–P66 traverse the membrane as a helical segment. Over Q67 to Q80 the chain is Cytoplasmic.

Belongs to the SPTSS family. SPTSSA subfamily. In terms of assembly, component of the serine palmitoyltransferase (SPT) complex, which is composed of SPTLC1, SPTLC2 or SPTLC3 and SPTSSA or SPTSSB. The heterodimer consisting of SPTLC1 and SPTLC2/SPTLC3 forms the catalytic core of the enzyme, while SPTSSA or SPTSSB subunits determine substrate specificity. SPT also interacts with ORMDL proteins, especially ORMDL3, which negatively regulate SPT activity in the presence of ceramides.

The protein resides in the endoplasmic reticulum membrane. Its pathway is lipid metabolism; sphingolipid metabolism. In terms of biological role, component of the serine palmitoyltransferase multisubunit enzyme (SPT) that catalyzes the initial and rate-limiting step in sphingolipid biosynthesis by condensing L-serine and activated acyl-CoA (most commonly palmitoyl-CoA) to form long-chain bases. The SPT complex is composed of SPTLC1, SPTLC2 or SPTLC3 and SPTSSA or SPTSSB. Within this complex, the heterodimer consisting of SPTLC1 and SPTLC2/SPTLC3 forms the catalytic core. Within the SPT complex, SPTSSA stimulates the catalytic activity and plays a role in substrate specificity, which depends upon the overall complex composition. The SPTLC1-SPTLC2-SPTSSA complex shows a strong preference for C16-CoA substrate, while the SPTLC1-SPTLC3-SPTSSA isozyme uses both C14-CoA and C16-CoA as substrates, with a slight preference for C14-CoA. Independently of its action as a SPT component, may be involved in MBOAT7 localization to mitochondria-associated membranes, a membrane bridge between the endoplasmic reticulum and mitochondria, may hence affect MBOAT7-catalyzed incorporation of arachidonic acid into phosphatidylinositol. The protein is Serine palmitoyltransferase small subunit A-A (sptssa-a) of Xenopus laevis (African clawed frog).